The primary structure comprises 103 residues: Small ribosomal subunit protein uS10 (103 aa).

The protein belongs to the universal ribosomal protein uS10 family. Part of the 30S ribosomal subunit.

Involved in the binding of tRNA to the ribosomes. The polypeptide is Small ribosomal subunit protein uS10 (Dechloromonas aromatica (strain RCB)).